The primary structure comprises 695 residues: U1 snRNP-associated protein usp107 (695 aa).

A compositionally biased stretch (basic and acidic residues) spans 85–96 (RDNESQQKDRKN). The tract at residues 85 to 134 (RDNESQQKDRKNLPRNQKSNEIQEKQTFQTPSSEKSTTERESRPFVPPNS) is disordered. The span at 98–113 (PRNQKSNEIQEKQTFQ) shows a compositional bias: polar residues. Positions 139 to 221 (RMLFIGNIPK…PSTRLSLITD (83 aa)) constitute an RRM domain. The stretch at 265 to 369 (DVRSRIERAA…NLLSKHRISR (105 aa)) forms a coiled coil. 2 stretches are compositionally biased toward basic and acidic residues: residues 487 to 506 (EEDADALDRKEEERELRTRG) and 548 to 561 (SERREFGLPERLLL). 2 disordered regions span residues 487–509 (EEDADALDRKEEERELRTRGEGA) and 540–590 (QTKK…AEKT). The 91-residue stretch at 605 to 695 (ESLWALPIDW…HVLLILRSEA (91 aa)) folds into the PWI domain.

In terms of assembly, component of the U1 snRNP particle, a subcomplex of the spliceosome. Interacts with prp5 and usp102.

It is found in the cytoplasm. It localises to the nucleus. Functionally, component of the U1 snRNP particle, which recognizes and binds the 5'-splice site of pre-mRNA. Together with other non-snRNP factors, U1 snRNP forms the spliceosomal commitment complex, that targets pre-mRNA to the splicing pathway. The polypeptide is U1 snRNP-associated protein usp107 (usp107) (Schizosaccharomyces pombe (strain 972 / ATCC 24843) (Fission yeast)).